The sequence spans 356 residues: Glycerol-1-phosphate dehydrogenase [NAD(P)+] (356 aa).

NAD(+) is bound by residues 103 to 107 (GRSID) and 125 to 128 (TAAS). Asp-130 lines the substrate pocket. Position 134 (Ser-134) interacts with NAD(+). Asp-177 is a binding site for substrate. The Zn(2+) site is built by Asp-177 and His-257. His-261 contributes to the substrate binding site. His-273 contributes to the Zn(2+) binding site.

Belongs to the glycerol-1-phosphate dehydrogenase family. Zn(2+) is required as a cofactor.

It localises to the cytoplasm. The catalysed reaction is sn-glycerol 1-phosphate + NAD(+) = dihydroxyacetone phosphate + NADH + H(+). It catalyses the reaction sn-glycerol 1-phosphate + NADP(+) = dihydroxyacetone phosphate + NADPH + H(+). It functions in the pathway membrane lipid metabolism; glycerophospholipid metabolism. Its function is as follows. Catalyzes the NAD(P)H-dependent reduction of dihydroxyacetonephosphate (DHAP or glycerone phosphate) to glycerol 1-phosphate (G1P). The G1P thus generated is used as the glycerophosphate backbone of phospholipids in the cellular membranes of Archaea. The polypeptide is Glycerol-1-phosphate dehydrogenase [NAD(P)+] (Methanosarcina acetivorans (strain ATCC 35395 / DSM 2834 / JCM 12185 / C2A)).